Consider the following 793-residue polypeptide: MVRATGTRMGLLLPIILALAIGSSAAGISSNDPCYFEGKPRKCLPSFVNAAYGNPVQASSVCGAQQPERYCELLRDGNAGECRSCEQQRYGPAALTDLNNPSNVTCWRSGAVNVPHDPDSAPPDNVTLTLSLGKKYELTYISLSFCPRSPRPDSLAIFKSSDFGQTWQPFQFYSSQCQKFYGRPDRAKISKFNEQEARCINSQHDTGGAAQRFAFNTLEGRPSANDLDSSLVLQDWVTATDIRVVFHRLELPPQLLKVKNANAFSDEMGGSREEDEDDDADLELDGEQDEYDYNLQDNDSADAGYDEYEEPKKHLELDDDHLHLDYASDGESVVKRQGKHKGSAYEKHYQSKLAATTPPQQPPKVTPPGKVTPPSTAAPSAAASAVTLPISQHYAVSDFAVGGRCKCNGHASECVATVSSGSGTALSDQDDGQDEDTPSAPSLANHFGRSTQMSAKLTMTCACKHNTAGPECERCKPFYFDRPWGRATDNDANECKMCQCNGHARRCRFNLELYKLSGRVSGGVCYNCQHDTTGRYCHYCREGYYRDATKPPNHRKVCKRCDCHPVGSTGKTCNHLSGQCPCKEGVTGLTCNRCARGYQQTRSHVAPCIKVPTNANMIQAESAGGGGGGGTGDYKDGGGSQVEEMKKYCGKCKASPKKLNLNKFCMEDYAILAKVIGHDRASQDISTEKFSIERQNEIYKYEINIQTIFKRNPMSGTTSSLLGRGNMMLLVPRKSIECQCPKIKLNKSYLILGRDSEAAPGYLAIGPSSVVLEWKDEWSLRMKRFQRRARKCS.

The N-terminal stretch at 1–22 is a signal peptide; it reads MVRATGTRMGLLLPIILALAIG. Positions 39-303 constitute a Laminin N-terminal domain; sequence KPRKCLPSFV…NLQDNDSADA (265 aa). N-linked (GlcNAc...) asparagine glycosylation is found at Asn-103, Asn-125, and Asn-298. The segment at 332–378 is disordered; sequence SVVKRQGKHKGSAYEKHYQSKLAATTPPQQPPKVTPPGKVTPPSTAA. Positions 367-378 are enriched in low complexity; it reads PPGKVTPPSTAA. Disulfide bonds link Cys-405/Cys-414, Cys-407/Cys-461, Cys-463/Cys-472, Cys-475/Cys-495, Cys-498/Cys-507, Cys-500/Cys-525, Cys-528/Cys-537, Cys-540/Cys-558, Cys-561/Cys-573, Cys-563/Cys-580, Cys-582/Cys-591, Cys-594/Cys-608, Cys-649/Cys-738, Cys-652/Cys-740, and Cys-665/Cys-792. 3 Laminin EGF-like domains span residues 405-497, 498-560, and 561-610; these read CKCN…ECKM, CQCN…VCKR, and CDCH…PCIK. Residues 420–446 are disordered; that stretch reads SGSGTALSDQDDGQDEDTPSAPSLANH. The segment covering 428–437 has biased composition (acidic residues); it reads DQDDGQDEDT. The NTR domain occupies 649–792; the sequence is CGKCKASPKK…KRFQRRARKC (144 aa). Residue Asn-746 is glycosylated (N-linked (GlcNAc...) asparagine).

In terms of assembly, binds to unc-5 and fra receptors. In terms of tissue distribution, at 24 hr after puparium formation (APF), detected in the most anterior (oldest) L3, L4 and L5 lamina neurons (at protein level). At 48 hr APF, expressed in all L3, L4 and L5 neurons with slightly higher expression in the L3 neurons (at protein level). At the midline of developing CNS and in different subsets of neurons, muscles, and epidermal patches.

Its subcellular location is the secreted. The protein localises to the extracellular space. It localises to the extracellular matrix. The protein resides in the cytoplasm. It is found in the perinuclear region. Netrins control guidance of CNS commissural axons and peripheral motor axons. Its association with either fra or unc-5 receptors will lead to axon attraction or repulsion, respectively. While short-range repulsion requires both fra and unc-5 receptors, long-range repulsion only requires unc-5. This Drosophila melanogaster (Fruit fly) protein is Netrin-B (NetB).